The chain runs to 597 residues: Elongation factor 4 (597 aa).

A tr-type G domain is found at 2–184; that stretch reads KNIRNFSIIA…EIVAKIPAPA (183 aa). Residues 14-19 and 131-134 each bind GTP; these read DHGKST and NKID.

The protein belongs to the TRAFAC class translation factor GTPase superfamily. Classic translation factor GTPase family. LepA subfamily.

The protein localises to the cell inner membrane. The enzyme catalyses GTP + H2O = GDP + phosphate + H(+). Its function is as follows. Required for accurate and efficient protein synthesis under certain stress conditions. May act as a fidelity factor of the translation reaction, by catalyzing a one-codon backward translocation of tRNAs on improperly translocated ribosomes. Back-translocation proceeds from a post-translocation (POST) complex to a pre-translocation (PRE) complex, thus giving elongation factor G a second chance to translocate the tRNAs correctly. Binds to ribosomes in a GTP-dependent manner. The chain is Elongation factor 4 from Neisseria meningitidis serogroup A / serotype 4A (strain DSM 15465 / Z2491).